A 219-amino-acid polypeptide reads, in one-letter code: Ras-related protein Rab-3B (219 aa).

Ala2 is modified (N-acetylalanine). Residues Ser31, Ser32, Val33, Gly34, Lys35, Thr36, Ser37, Pro49, and Ser53 each coordinate GTP. Residue Thr36 participates in Mg(2+) binding. The Switch 1 signature appears at 45-58; sequence DTFTPAFVSTVGID. 2 residues coordinate Mg(2+): Thr54 and Asp77. The short motif at 78–96 is the Switch 2 element; the sequence is TAGQERYRTITTAYYRGAM. Gly80 serves as a coordination point for GTP. The residue at position 86 (Thr86) is a Phosphothreonine. Asn135, Lys136, Asp138, Ala166, and Lys167 together coordinate GTP. Ser188 is modified (phosphoserine). 2 S-geranylgeranyl cysteine lipidation sites follow: Cys217 and Cys219. Cysteine methyl ester is present on Cys219.

Belongs to the small GTPase superfamily. Rab family. As to quaternary structure, interacts with RIMS1, RIMS2, RPH3A and RPH3AL. The GTP-bound form interacts with GAS8/DRC4 (via coiled-coil domains). Interacts with GDI2, CHM and CHML; phosphorylation at Thr-86 disrupts these interactions. Interacts with MADD (via uDENN domain); the GTP-bound form is preferred for interaction. Mg(2+) is required as a cofactor. In terms of processing, phosphorylation of Thr-86 in the switch II region by LRRK2 prevents the association of RAB regulatory proteins, including CHM, CHML and RAB GDP dissociation inhibitor GDI2.

The protein resides in the cell membrane. Its subcellular location is the golgi apparatus. The catalysed reaction is GTP + H2O = GDP + phosphate + H(+). Regulated by guanine nucleotide exchange factors (GEFs) which promote the exchange of bound GDP for free GTP. Regulated by GTPase activating proteins (GAPs) which increase the GTP hydrolysis activity. Inhibited by GDP dissociation inhibitors (GDIs) which prevent Rab-GDP dissociation. In terms of biological role, the small GTPases Rab are key regulators of intracellular membrane trafficking, from the formation of transport vesicles to their fusion with membranes. Rabs cycle between an inactive GDP-bound form and an active GTP-bound form that is able to recruit to membranes different sets of downstream effectors directly responsible for vesicle formation, movement, tethering and fusion. The chain is Ras-related protein Rab-3B (RAB3B) from Bos taurus (Bovine).